Reading from the N-terminus, the 202-residue chain is ATP-dependent Clp protease proteolytic subunit (202 aa).

Ser-101 acts as the Nucleophile in catalysis. The active site involves His-126.

Belongs to the peptidase S14 family. Component of the chloroplastic Clp protease core complex.

It localises to the plastid. The protein localises to the chloroplast stroma. It carries out the reaction Hydrolysis of proteins to small peptides in the presence of ATP and magnesium. alpha-casein is the usual test substrate. In the absence of ATP, only oligopeptides shorter than five residues are hydrolyzed (such as succinyl-Leu-Tyr-|-NHMec, and Leu-Tyr-Leu-|-Tyr-Trp, in which cleavage of the -Tyr-|-Leu- and -Tyr-|-Trp bonds also occurs).. In terms of biological role, cleaves peptides in various proteins in a process that requires ATP hydrolysis. Has a chymotrypsin-like activity. Plays a major role in the degradation of misfolded proteins. The polypeptide is ATP-dependent Clp protease proteolytic subunit (Liriodendron tulipifera (Tuliptree)).